The primary structure comprises 493 residues: Galactose-1-phosphate uridylyltransferase (493 aa).

This sequence belongs to the galactose-1-phosphate uridylyltransferase type 2 family.

Its subcellular location is the cytoplasm. It carries out the reaction alpha-D-galactose 1-phosphate + UDP-alpha-D-glucose = alpha-D-glucose 1-phosphate + UDP-alpha-D-galactose. The protein operates within carbohydrate metabolism; galactose metabolism. The chain is Galactose-1-phosphate uridylyltransferase from Streptococcus pneumoniae (strain Hungary19A-6).